The primary structure comprises 427 residues: MGKTIAEKIFASHLVDEPFAGTKVLRLDVVMCHEITTPIAIADLMARGKDRVFDPTKIKAVIDHVTPSKDSKTATQAKMLRDWARRHGIVDFFDVGANGVCHALFPEKGFIRPGYTVIMGDSHTCTHGAFGAFAAGIGTTDLEVGILKGVCAFREPKTIRINLNGSLPEGVYAKDVILHVIGRIGVNGATDRVMEFRGSVVDTMTMESRMTLCNMAIEAGGTSGICMPDMVTVDYLWPFLKDEYQSREAALAAFSLWRSDEDAVYEQVLDFDVSSLEPIVTFGYKPDQVKPVSEIAGTPVDQVYLGSCTNGRLEDLRIAARILKGKKIAPTVRGILSPATPKIYQDAMREGLIDIFMEAGFCVTNPTCGACLGMSNGVLAEGEVCASTTNRNFMGRMGKGGMVHLMSPATSAATAIEGKIADPRKYL.

Positions 308, 368, and 371 each coordinate [4Fe-4S] cluster.

Belongs to the aconitase/IPM isomerase family. LeuC type 2 subfamily. As to quaternary structure, heterodimer of LeuC and LeuD. [4Fe-4S] cluster is required as a cofactor.

It carries out the reaction (2R,3S)-3-isopropylmalate = (2S)-2-isopropylmalate. Its pathway is amino-acid biosynthesis; L-leucine biosynthesis; L-leucine from 3-methyl-2-oxobutanoate: step 2/4. Catalyzes the isomerization between 2-isopropylmalate and 3-isopropylmalate, via the formation of 2-isopropylmaleate. In Geobacter sulfurreducens (strain ATCC 51573 / DSM 12127 / PCA), this protein is 3-isopropylmalate dehydratase large subunit.